Reading from the N-terminus, the 501-residue chain is Ribose import ATP-binding protein RbsA (501 aa).

2 ABC transporter domains span residues 5 to 241 (LSLE…VGRK) and 252 to 498 (LRND…TGGV). 37 to 44 (GENGAGKS) is a binding site for ATP.

This sequence belongs to the ABC transporter superfamily. Ribose importer (TC 3.A.1.2.1) family. The complex is composed of an ATP-binding protein (RbsA), two transmembrane proteins (RbsC) and a solute-binding protein (RbsB).

It is found in the cell inner membrane. It carries out the reaction D-ribose(out) + ATP + H2O = D-ribose(in) + ADP + phosphate + H(+). In terms of biological role, part of the ABC transporter complex RbsABC involved in ribose import. Responsible for energy coupling to the transport system. This chain is Ribose import ATP-binding protein RbsA, found in Hahella chejuensis (strain KCTC 2396).